Reading from the N-terminus, the 92-residue chain is Small ribosomal subunit protein uS19c (92 aa).

This sequence belongs to the universal ribosomal protein uS19 family.

Its subcellular location is the plastid. The protein localises to the chloroplast. In terms of biological role, protein S19 forms a complex with S13 that binds strongly to the 16S ribosomal RNA. This chain is Small ribosomal subunit protein uS19c, found in Vitis vinifera (Grape).